Consider the following 128-residue polypeptide: Ribonuclease pancreatic B (128 aa).

The segment at 1–21 is disordered; that stretch reads AESSAMKFQRQHMDPEGSPSN. Residues Lys-7 and Arg-10 each coordinate substrate. Catalysis depends on His-12, which acts as the Proton acceptor. 2 N-linked (GlcNAc...) asparagine glycosylation sites follow: Asn-21 and Asn-34. Disulfide bonds link Cys-26-Cys-84, Cys-40-Cys-95, Cys-58-Cys-110, and Cys-65-Cys-72. Substrate contacts are provided by residues 41–45, Lys-66, and Arg-85; that span reads KPVNT. Residue His-119 is the Proton donor of the active site.

The protein belongs to the pancreatic ribonuclease family. In terms of tissue distribution, pancreas.

The protein resides in the secreted. It catalyses the reaction an [RNA] containing cytidine + H2O = an [RNA]-3'-cytidine-3'-phosphate + a 5'-hydroxy-ribonucleotide-3'-[RNA].. The enzyme catalyses an [RNA] containing uridine + H2O = an [RNA]-3'-uridine-3'-phosphate + a 5'-hydroxy-ribonucleotide-3'-[RNA].. The chain is Ribonuclease pancreatic B from Cavia porcellus (Guinea pig).